A 549-amino-acid polypeptide reads, in one-letter code: Oxygen-dependent choline dehydrogenase (549 aa).

FAD is bound at residue 4 to 33; it reads DFVIIGSGSAGSAMAYRLSENGRYSVIVIE. Catalysis depends on histidine 465, which acts as the Proton acceptor.

This sequence belongs to the GMC oxidoreductase family. Requires FAD as cofactor.

The enzyme catalyses choline + A = betaine aldehyde + AH2. It catalyses the reaction betaine aldehyde + NAD(+) + H2O = glycine betaine + NADH + 2 H(+). It participates in amine and polyamine biosynthesis; betaine biosynthesis via choline pathway; betaine aldehyde from choline (cytochrome c reductase route): step 1/1. Involved in the biosynthesis of the osmoprotectant glycine betaine. Catalyzes the oxidation of choline to betaine aldehyde and betaine aldehyde to glycine betaine at the same rate. This Brucella suis biovar 1 (strain 1330) protein is Oxygen-dependent choline dehydrogenase.